A 593-amino-acid polypeptide reads, in one-letter code: Trehalose synthase/amylase TreS (593 aa).

Asp-90 contributes to the substrate binding site. Position 132 (Asn-132) interacts with Ca(2+). Substrate-binding residues include His-133 and Gln-198. Asp-200 provides a ligand contact to Ca(2+). Arg-228 is a binding site for substrate. Asp-230 serves as the catalytic Nucleophile. The Ca(2+) site is built by Tyr-234, Leu-235, and Glu-237. The active-site Proton donor is the Glu-272. Substrate-binding residues include His-341 and Asp-342.

It belongs to the glycosyl hydrolase 13 family. TreS subfamily. In terms of assembly, homohexamer.

It catalyses the reaction D-maltose = alpha,alpha-trehalose. The catalysed reaction is Endohydrolysis of (1-&gt;4)-alpha-D-glucosidic linkages in polysaccharides containing three or more (1-&gt;4)-alpha-linked D-glucose units.. Its pathway is glycan biosynthesis; glycogen biosynthesis. The amylase activity is stimulated by addition of Ca(2+), but this cation and other divalent cations inhibit the trehalose synthase activity. In addition, trehalose synthase activity, but not amylase activity, is strongly inhibited, and in a competitive manner, by validoxylamine. On the other hand, amylase, but not trehalose synthase activity, is inhibited by the known transition-state amylase inhibitor, acarbose, suggesting the possibility of two different active sites. Other metal ions such as Mg(2+), Mn(2+), and Co(2+) are also somewhat effective in the stimulation of amylase activity, but Hg(2+), Cu(2+), Ni(2+) and Zn(2+) are inhibitory. In terms of biological role, catalyzes the reversible interconversion of maltose and trehalose by transglucosylation. Maltose is the preferred substrate. To a lesser extent, also displays amylase activity, catalyzing the endohydrolysis of (1-&gt;4)-alpha-D-glucosidic linkages in glycogen and maltooligosaccharides such as maltoheptaose, to produce maltose which then can be converted to trehalose. TreS plays a key role in the utilization of trehalose for the production of glycogen and alpha-glucan via the TreS-Pep2 branch involved in the biosynthesis of maltose-1-phosphate (M1P). Might also function as a sensor and/or regulator of trehalose levels within the cell. Thus, when trehalose levels in the cell become dangerously low, TreS can expedite the conversion of glycogen to maltose via its amylase activity and then convert the maltose to trehalose; but this enzyme also can expedite or promote the conversion of trehalose to glycogen when cytoplasmic trehalose levels become too high. Is also able to catalyze the hydrolytic cleavage of alpha-aryl glucosides, as well as alpha-glucosyl fluoride in vitro. This is Trehalose synthase/amylase TreS from Mycolicibacterium smegmatis (strain ATCC 700084 / mc(2)155) (Mycobacterium smegmatis).